Consider the following 229-residue polypeptide: Enolase-phosphatase E1 (229 aa).

The protein belongs to the HAD-like hydrolase superfamily. MasA/MtnC family. In terms of assembly, monomer. Mg(2+) serves as cofactor.

It catalyses the reaction 5-methylsulfanyl-2,3-dioxopentyl phosphate + H2O = 1,2-dihydroxy-5-(methylsulfanyl)pent-1-en-3-one + phosphate. It participates in amino-acid biosynthesis; L-methionine biosynthesis via salvage pathway; L-methionine from S-methyl-5-thio-alpha-D-ribose 1-phosphate: step 3/6. It functions in the pathway amino-acid biosynthesis; L-methionine biosynthesis via salvage pathway; L-methionine from S-methyl-5-thio-alpha-D-ribose 1-phosphate: step 4/6. Functionally, bifunctional enzyme that catalyzes the enolization of 2,3-diketo-5-methylthiopentyl-1-phosphate (DK-MTP-1-P) into the intermediate 2-hydroxy-3-keto-5-methylthiopentenyl-1-phosphate (HK-MTPenyl-1-P), which is then dephosphorylated to form the acireductone 1,2-dihydroxy-3-keto-5-methylthiopentene (DHK-MTPene). The protein is Enolase-phosphatase E1 of Enterobacter sp. (strain 638).